The sequence spans 593 residues: ATP-dependent RNA helicase DDX55 (593 aa).

A Q motif motif is present at residues 9-37 (WGSLPVKLHDNILQTLKELGFTYMTPVQS). Residues 40–223 (IPLFMSNKDV…RAGLRNPVRI (184 aa)) enclose the Helicase ATP-binding domain. 53 to 60 (AVTGSGKT) serves as a coordination point for ATP. Residues 171-174 (DEAD) carry the DEAD box motif. A Helicase C-terminal domain is found at 241-405 (KLSNYYTMCR…SVKDVVDVLP (165 aa)). The span at 524-535 (IKKDRKKKRLPK) shows a compositional bias: basic residues. Disordered stretches follow at residues 524–545 (IKKDRKKKRLPKAKLDQDSDAA) and 569–593 (EEDFDKQMSSTDKHKPAGIDSSDGD). Positions 531–560 (KRLPKAKLDQDSDAAEEDLNELMNDTRLLK) are important for nuclear localization. The stretch at 535–565 (KAKLDQDSDAAEEDLNELMNDTRLLKKLKKG) forms a coiled coil.

This sequence belongs to the DEAD box helicase family. DDX55/SPB4 subfamily. As to quaternary structure, interacts with 28S rRNA. Interacts with double-stranded RNA substrates in vitro; the interaction stimulates ATPase activity.

The protein localises to the nucleus. Its subcellular location is the nucleoplasm. It carries out the reaction ATP + H2O = ADP + phosphate + H(+). Probable ATP-binding RNA helicase. Plays an essential role in early embryonic development. Has ATPase activity and is involved in the maturation of precursor large subunit rRNAs. This is ATP-dependent RNA helicase DDX55 (ddx55) from Danio rerio (Zebrafish).